A 215-amino-acid chain; its full sequence is Proapoptotic nucleolar protein 1 (215 aa).

The tract at residues 35-215 is disordered; sequence RKGTPTARCL…RLPAPRSAST (181 aa). A compositionally biased stretch (pro residues) spans 169 to 180; that stretch reads PRPPQHLSPPQP. Residues 185-215 are necessary for nucleolar localization; that stretch reads MGAAEGSRRADTHHARRRRRARLPAPRSAST.

As to expression, widely expressed.

The protein localises to the nucleus. It localises to the nucleolus. In terms of biological role, apoptosis-inducing protein that modulates the tumor suppressor function of CDKN2A/p14ARF. Enhances the stability of CDKN2A/p14ARF protein by protecting it from degradation. May act as a tumor suppressor. This Homo sapiens (Human) protein is Proapoptotic nucleolar protein 1.